Reading from the N-terminus, the 443-residue chain is Probable glycine dehydrogenase (decarboxylating) subunit 1 (443 aa).

It belongs to the GcvP family. N-terminal subunit subfamily. In terms of assembly, the glycine cleavage system is composed of four proteins: P, T, L and H. In this organism, the P 'protein' is a heterodimer of two subunits.

It catalyses the reaction N(6)-[(R)-lipoyl]-L-lysyl-[glycine-cleavage complex H protein] + glycine + H(+) = N(6)-[(R)-S(8)-aminomethyldihydrolipoyl]-L-lysyl-[glycine-cleavage complex H protein] + CO2. In terms of biological role, the glycine cleavage system catalyzes the degradation of glycine. The P protein binds the alpha-amino group of glycine through its pyridoxal phosphate cofactor; CO(2) is released and the remaining methylamine moiety is then transferred to the lipoamide cofactor of the H protein. The sequence is that of Probable glycine dehydrogenase (decarboxylating) subunit 1 from Solidesulfovibrio magneticus (strain ATCC 700980 / DSM 13731 / RS-1) (Desulfovibrio magneticus).